The following is a 362-amino-acid chain: Phosphoserine aminotransferase (362 aa).

L-glutamate contacts are provided by Ser9 and Arg42. Pyridoxal 5'-phosphate contacts are provided by residues 76–77 (GR), Trp102, Thr153, Asp174, and Gln197. An N6-(pyridoxal phosphate)lysine modification is found at Lys198. Position 239–240 (239–240 (NT)) interacts with pyridoxal 5'-phosphate.

Belongs to the class-V pyridoxal-phosphate-dependent aminotransferase family. SerC subfamily. As to quaternary structure, homodimer. Pyridoxal 5'-phosphate serves as cofactor.

The protein resides in the cytoplasm. It carries out the reaction O-phospho-L-serine + 2-oxoglutarate = 3-phosphooxypyruvate + L-glutamate. The catalysed reaction is 4-(phosphooxy)-L-threonine + 2-oxoglutarate = (R)-3-hydroxy-2-oxo-4-phosphooxybutanoate + L-glutamate. It participates in amino-acid biosynthesis; L-serine biosynthesis; L-serine from 3-phospho-D-glycerate: step 2/3. Its pathway is cofactor biosynthesis; pyridoxine 5'-phosphate biosynthesis; pyridoxine 5'-phosphate from D-erythrose 4-phosphate: step 3/5. Functionally, catalyzes the reversible conversion of 3-phosphohydroxypyruvate to phosphoserine and of 3-hydroxy-2-oxo-4-phosphonooxybutanoate to phosphohydroxythreonine. This Salmonella arizonae (strain ATCC BAA-731 / CDC346-86 / RSK2980) protein is Phosphoserine aminotransferase.